The following is a 122-amino-acid chain: Large ribosomal subunit protein uL14 (122 aa).

Belongs to the universal ribosomal protein uL14 family. As to quaternary structure, part of the 50S ribosomal subunit. Forms a cluster with proteins L3 and L19. In the 70S ribosome, L14 and L19 interact and together make contacts with the 16S rRNA in bridges B5 and B8.

In terms of biological role, binds to 23S rRNA. Forms part of two intersubunit bridges in the 70S ribosome. The protein is Large ribosomal subunit protein uL14 of Acidovorax sp. (strain JS42).